Here is a 67-residue protein sequence, read N- to C-terminus: Medusin-H1 (67 aa).

Residues 1 to 22 (MDFLKKSLFLVLFLGFFSLSIC) form the signal peptide. A propeptide spanning residues 23-48 (EEEKRETEEKENEQEDDREERREEKR) is cleaved from the precursor. The tract at residues 24–46 (EEKRETEEKENEQEDDREERREE) is disordered. Over residues 31 to 40 (EKENEQEDDR) the composition is skewed to acidic residues. The residue at position 66 (Leu-66) is a Leucine amide.

It belongs to the frog skin active peptide (FSAP) family. Medusin subfamily. Expressed by the skin glands.

The protein resides in the secreted. Its function is as follows. Antimicrobial peptide with activity against Gram-positive bacteria (S.aureus, MIC=32 mg/L) and fungi (C.albicans, MIC=128 mg/L). Shows weak hemolytic activity. The polypeptide is Medusin-H1 (Pithecopus hypochondrialis (Orange-legged leaf frog)).